Consider the following 417-residue polypeptide: Gamma-glutamyl phosphate reductase (417 aa).

Belongs to the gamma-glutamyl phosphate reductase family.

The protein resides in the cytoplasm. The enzyme catalyses L-glutamate 5-semialdehyde + phosphate + NADP(+) = L-glutamyl 5-phosphate + NADPH + H(+). Its pathway is amino-acid biosynthesis; L-proline biosynthesis; L-glutamate 5-semialdehyde from L-glutamate: step 2/2. Its function is as follows. Catalyzes the NADPH-dependent reduction of L-glutamate 5-phosphate into L-glutamate 5-semialdehyde and phosphate. The product spontaneously undergoes cyclization to form 1-pyrroline-5-carboxylate. The protein is Gamma-glutamyl phosphate reductase of Bacteroides thetaiotaomicron (strain ATCC 29148 / DSM 2079 / JCM 5827 / CCUG 10774 / NCTC 10582 / VPI-5482 / E50).